A 324-amino-acid chain; its full sequence is Olfactory receptor 52N5 (324 aa).

Residues 1–33 (MPLFNSLCWFPTIHVTPPSFILNGIPGLERVHV) are Extracellular-facing. A helical membrane pass occupies residues 34–54 (WISLPLCTMYIIFLVGNLGLV). Residues 55 to 62 (YLIYYEES) lie on the Cytoplasmic side of the membrane. A helical membrane pass occupies residues 63–84 (LHHPMYFFFGHALSLIDLLTCT). Over 85 to 108 (TTLPNALCIFWFSLKEINFNACLA) the chain is Extracellular. Cysteines 106 and 198 form a disulfide. The chain crosses the membrane as a helical span at residues 109-129 (QMFFVHGFTGVESGVLMLMAL). Topologically, residues 130-148 (DRYVAICYPLRYATTLTNP) are cytoplasmic. A helical transmembrane segment spans residues 149–169 (IIAKAELATFLRGVLLMIPFP). At 170–205 (FLVKRLPFCQSNIISHTYCDHMSVVKLSCASIKVNV) the chain is on the extracellular side. The helical transmembrane segment at 206 to 226 (IYGLMVALLIGVFDICCISLS) threads the bilayer. Residues 227–246 (YTLILKAAISLSSSDARQKA) are Cytoplasmic-facing. The helical transmembrane segment at 247 to 267 (FSTCTAHISAIIITYVPAFFT) threads the bilayer. Topologically, residues 268–283 (FFAHRFGGHTIPPSLH) are extracellular. Residues 284–304 (IIVANLYLLLPPTLNPIVYGV) form a helical membrane-spanning segment. Residues 305 to 324 (KTKQIRKSVIKFFQGDKGAG) are Cytoplasmic-facing.

The protein belongs to the G-protein coupled receptor 1 family.

Its subcellular location is the cell membrane. Functionally, odorant receptor. This Homo sapiens (Human) protein is Olfactory receptor 52N5 (OR52N5).